The following is a 122-amino-acid chain: Secreted RxLR effector protein 80 (122 aa).

A signal peptide spans Met-1–Ser-21. Positions Arg-72–Arg-75 match the RxLR motif.

This sequence belongs to the RxLR effector family.

It is found in the secreted. The protein resides in the host endoplasmic reticulum membrane. Secreted effector that dos not suppress the host cell death induced by cell death-inducing proteins. This is Secreted RxLR effector protein 80 from Plasmopara viticola (Downy mildew of grapevine).